Consider the following 470-residue polypeptide: Methylenetetrahydrofolate--tRNA-(uracil-5-)-methyltransferase TrmFO (470 aa).

An FAD-binding site is contributed by 10–15 (GAGLAG).

This sequence belongs to the MnmG family. TrmFO subfamily. FAD is required as a cofactor.

It is found in the cytoplasm. It catalyses the reaction uridine(54) in tRNA + (6R)-5,10-methylene-5,6,7,8-tetrahydrofolate + NADH + H(+) = 5-methyluridine(54) in tRNA + (6S)-5,6,7,8-tetrahydrofolate + NAD(+). The catalysed reaction is uridine(54) in tRNA + (6R)-5,10-methylene-5,6,7,8-tetrahydrofolate + NADPH + H(+) = 5-methyluridine(54) in tRNA + (6S)-5,6,7,8-tetrahydrofolate + NADP(+). In terms of biological role, catalyzes the folate-dependent formation of 5-methyl-uridine at position 54 (M-5-U54) in all tRNAs. This chain is Methylenetetrahydrofolate--tRNA-(uracil-5-)-methyltransferase TrmFO, found in Prochlorococcus marinus (strain MIT 9215).